A 78-amino-acid polypeptide reads, in one-letter code: Probable cytochrome c oxidase subunit 6B (78 aa).

Residues Thr-21 to Trp-64 enclose the CHCH domain. Residues Cys-24–Cys-34 carry the Cx9C motif motif. Cystine bridges form between Cys-24/Cys-56 and Cys-34/Cys-45. Residues Cys-45–Cys-56 carry the Cx10C motif motif.

This sequence belongs to the cytochrome c oxidase subunit 6B family. In terms of assembly, component of the cytochrome c oxidase (complex IV, CIV), a multisubunit enzyme composed of a catalytic core of 3 subunits and several supernumerary subunits. The complex exists as a monomer or a dimer and forms supercomplexes (SCs) in the inner mitochondrial membrane with ubiquinol-cytochrome c oxidoreductase (cytochrome b-c1 complex, complex III, CIII).

The protein resides in the mitochondrion inner membrane. It functions in the pathway energy metabolism; oxidative phosphorylation. Its function is as follows. Component of the cytochrome c oxidase, the last enzyme in the mitochondrial electron transport chain which drives oxidative phosphorylation. The respiratory chain contains 3 multisubunit complexes succinate dehydrogenase (complex II, CII), ubiquinol-cytochrome c oxidoreductase (cytochrome b-c1 complex, complex III, CIII) and cytochrome c oxidase (complex IV, CIV), that cooperate to transfer electrons derived from NADH and succinate to molecular oxygen, creating an electrochemical gradient over the inner membrane that drives transmembrane transport and the ATP synthase. Cytochrome c oxidase is the component of the respiratory chain that catalyzes the reduction of oxygen to water. Electrons originating from reduced cytochrome c in the intermembrane space (IMS) are transferred via the dinuclear copper A center (CU(A)) of subunit 2 and heme A of subunit 1 to the active site in subunit 1, a binuclear center (BNC) formed by heme A3 and copper B (CU(B)). The BNC reduces molecular oxygen to 2 water molecules using 4 electrons from cytochrome c in the IMS and 4 protons from the mitochondrial matrix. The chain is Probable cytochrome c oxidase subunit 6B from Dictyostelium discoideum (Social amoeba).